We begin with the raw amino-acid sequence, 117 residues long: Immunoglobulin heavy variable 4-4 (117 aa).

A signal peptide spans 1-19 (MKHLWFFLLLVAAPRWVLS). The tract at residues 20-44 (QVQLQESGPGLVKPSGTLSLTCAVS) is framework-1. The Ig-like domain maps to 20 to 117 (QVQLQESGPG…ADTAVYYCAR (98 aa)). An intrachain disulfide couples C41 to C115. Residues 45 to 53 (GGSISSSNW) form a complementarity-determining-1 region. Residues 54-70 (WSWVRQPPGKGLEWIGE) are framework-2. The interval 71–77 (IYHSGST) is complementarity-determining-2. A framework-3 region spans residues 78–115 (NYNPSLKSRVTISVDKSKNQFSLKLSSVTAADTAVYYC). The interval 116–117 (AR) is complementarity-determining-3.

As to quaternary structure, immunoglobulins are composed of two identical heavy chains and two identical light chains; disulfide-linked.

It localises to the secreted. It is found in the cell membrane. In terms of biological role, v region of the variable domain of immunoglobulin heavy chains that participates in the antigen recognition. Immunoglobulins, also known as antibodies, are membrane-bound or secreted glycoproteins produced by B lymphocytes. In the recognition phase of humoral immunity, the membrane-bound immunoglobulins serve as receptors which, upon binding of a specific antigen, trigger the clonal expansion and differentiation of B lymphocytes into immunoglobulins-secreting plasma cells. Secreted immunoglobulins mediate the effector phase of humoral immunity, which results in the elimination of bound antigens. The antigen binding site is formed by the variable domain of one heavy chain, together with that of its associated light chain. Thus, each immunoglobulin has two antigen binding sites with remarkable affinity for a particular antigen. The variable domains are assembled by a process called V-(D)-J rearrangement and can then be subjected to somatic hypermutations which, after exposure to antigen and selection, allow affinity maturation for a particular antigen. This is Immunoglobulin heavy variable 4-4 from Homo sapiens (Human).